Consider the following 211-residue polypeptide: Thymidylate kinase (211 aa).

11–18 (GPDGAGKT) is a binding site for ATP.

The protein belongs to the thymidylate kinase family.

The enzyme catalyses dTMP + ATP = dTDP + ADP. Its function is as follows. Phosphorylation of dTMP to form dTDP in both de novo and salvage pathways of dTTP synthesis. This is Thymidylate kinase from Streptococcus uberis (strain ATCC BAA-854 / 0140J).